The sequence spans 221 residues: Adenylate kinase (221 aa).

10 to 15 (GAGKGT) contributes to the ATP binding site. The interval 30–59 (STGDMLRAAVKARTELGVAAKKIMDAGGLV) is NMP. AMP is bound by residues Thr31, Arg36, 57 to 59 (GLV), 85 to 88 (GFPR), and Gln92. The segment at 122–159 (GRRVHLASGRTYHIKFNPPKVEGKDDITGDPLIQRDDD) is LID. ATP is bound by residues Arg123 and 132-133 (TY). AMP contacts are provided by Arg156 and Arg167. ATP is bound at residue Ser207.

It belongs to the adenylate kinase family. In terms of assembly, monomer.

The protein localises to the cytoplasm. It carries out the reaction AMP + ATP = 2 ADP. Its pathway is purine metabolism; AMP biosynthesis via salvage pathway; AMP from ADP: step 1/1. Functionally, catalyzes the reversible transfer of the terminal phosphate group between ATP and AMP. Plays an important role in cellular energy homeostasis and in adenine nucleotide metabolism. The protein is Adenylate kinase of Polynucleobacter necessarius subsp. necessarius (strain STIR1).